The following is a 150-amino-acid chain: Ribonuclease HI (150 aa).

The region spanning 1-141 is the RNase H type-1 domain; sequence MKLINAYTDG…VDVLARGQAM (141 aa). Residues Asp9, Glu47, Asp69, and Asp133 each coordinate Mg(2+).

This sequence belongs to the RNase H family. Monomer. Requires Mg(2+) as cofactor.

The protein localises to the cytoplasm. It catalyses the reaction Endonucleolytic cleavage to 5'-phosphomonoester.. Functionally, endonuclease that specifically degrades the RNA of RNA-DNA hybrids. The chain is Ribonuclease HI from Xylella fastidiosa (strain Temecula1 / ATCC 700964).